A 314-amino-acid polypeptide reads, in one-letter code: Homoserine O-acetyltransferase (314 aa).

Cysteine 142 (acyl-thioester intermediate) is an active-site residue. Residues lysine 163 and serine 192 each coordinate substrate. The Proton acceptor role is filled by histidine 235. Glutamate 237 is a catalytic residue. Arginine 249 lines the substrate pocket.

Belongs to the MetA family.

It is found in the cytoplasm. The catalysed reaction is L-homoserine + acetyl-CoA = O-acetyl-L-homoserine + CoA. Its pathway is amino-acid biosynthesis; L-methionine biosynthesis via de novo pathway; O-acetyl-L-homoserine from L-homoserine: step 1/1. Functionally, transfers an acetyl group from acetyl-CoA to L-homoserine, forming acetyl-L-homoserine. The polypeptide is Homoserine O-acetyltransferase (Streptococcus thermophilus (strain ATCC BAA-250 / LMG 18311)).